The primary structure comprises 795 residues: MLPVVPVFNAVNALKEKTYLYLSSQLVLDGKDMTKDDILEFVQNSHGQNISVLLKDAKFEDDDLIVLLNNGVVTLFIDSDDYAAHLVEIGVPSIRLTLLKDGAYQFSFGQIQEIQQSQLVKASEISLETFTNSVLSGMKTDRPDGLYTTLVVDENERSLGLVYSNKESVSLAIETQTGIYFSRSRNEIWRKGATSGNVQKLLSIELDCDGDALKFVVRQGGSGSFCHLETESCFGNFRHGLYGLQKLLQERLLNAPEGSYTKRLFNDSDLLTAKIKEEAEELTEAVDKKDIAWECADLFYFAMARLVANGVSLEDVERNLNTKHLKITRRKGDAKPKFLKKEPVAVHEEDGKIVLNVVSASDKAAVEKAVTRPIQKTAEIMNLVNPIIENVIKNGDKALVELTAKFDGVQLETPVLEAPYPEEYLDGLTDELRDALDLSIENVKKFHAAQMQSETLDVETQPGVVCSRFPRPIEKVGLYIPGGTAILPSTALMLGVPAQVAGCKEIVFASPPRKSDGRVSPEVVYVASKVGASKIVLAGGAQAIAAMAYGTESVPKVDKILGPGNQFVTAAKMYVQNDTQALCSIDMPAGPSEVLVICDEEADVDFVASDLLSQAEHGIDSQVILVGVSLSDSKIEALQNAVHEQAMQLPRVDIVRKCIAHSSIILCDSYEEAFKMSNQYAPEHLILQISNAEDYVKDVDHAGSIFVGAYTPESCGDYSSGTNHTLPTYGYARQYSGVNTATFQKFITSQVVTPVGLEHIGHAVMSVAKVEGLDAHRNAVKIRMSKLGLLPSGFE.

The phosphoribosyl-AMP cyclohydrolase stretch occupies residues 1 to 225 (MLPVVPVFNA…VVRQGGSGSF (225 aa)). The interval 226-308 (CHLETESCFG…FYFAMARLVA (83 aa)) is phosphoribosyl-ATP pyrophosphohydrolase. The interval 309–795 (NGVSLEDVER…KLGLLPSGFE (487 aa)) is histidinol dehydrogenase. Zn(2+) is bound by residues Q614 and H617. Catalysis depends on residues E683 and H684. D717 and H776 together coordinate Zn(2+).

It in the C-terminal section; belongs to the histidinol dehydrogenase family. Zn(2+) is required as a cofactor.

The catalysed reaction is 1-(5-phospho-beta-D-ribosyl)-5'-AMP + H2O = 1-(5-phospho-beta-D-ribosyl)-5-[(5-phospho-beta-D-ribosylamino)methylideneamino]imidazole-4-carboxamide. It carries out the reaction 1-(5-phospho-beta-D-ribosyl)-ATP + H2O = 1-(5-phospho-beta-D-ribosyl)-5'-AMP + diphosphate + H(+). It catalyses the reaction L-histidinol + 2 NAD(+) + H2O = L-histidine + 2 NADH + 3 H(+). It participates in amino-acid biosynthesis; L-histidine biosynthesis; L-histidine from 5-phospho-alpha-D-ribose 1-diphosphate: step 2/9. Its pathway is amino-acid biosynthesis; L-histidine biosynthesis; L-histidine from 5-phospho-alpha-D-ribose 1-diphosphate: step 3/9. It functions in the pathway amino-acid biosynthesis; L-histidine biosynthesis; L-histidine from 5-phospho-alpha-D-ribose 1-diphosphate: step 9/9. The chain is Histidine biosynthesis trifunctional protein (HIS4) from Kluyveromyces lactis (strain ATCC 8585 / CBS 2359 / DSM 70799 / NBRC 1267 / NRRL Y-1140 / WM37) (Yeast).